The primary structure comprises 488 residues: Probable glycine dehydrogenase (decarboxylating) subunit 2 (488 aa).

N6-(pyridoxal phosphate)lysine is present on lysine 274.

This sequence belongs to the GcvP family. C-terminal subunit subfamily. As to quaternary structure, the glycine cleavage system is composed of four proteins: P, T, L and H. In this organism, the P 'protein' is a heterodimer of two subunits. The cofactor is pyridoxal 5'-phosphate.

The enzyme catalyses N(6)-[(R)-lipoyl]-L-lysyl-[glycine-cleavage complex H protein] + glycine + H(+) = N(6)-[(R)-S(8)-aminomethyldihydrolipoyl]-L-lysyl-[glycine-cleavage complex H protein] + CO2. The glycine cleavage system catalyzes the degradation of glycine. The P protein binds the alpha-amino group of glycine through its pyridoxal phosphate cofactor; CO(2) is released and the remaining methylamine moiety is then transferred to the lipoamide cofactor of the H protein. This chain is Probable glycine dehydrogenase (decarboxylating) subunit 2, found in Listeria monocytogenes serotype 4a (strain HCC23).